We begin with the raw amino-acid sequence, 203 residues long: Hypoxanthine-guanine phosphoribosyltransferase (203 aa).

The diphosphate site is built by Lys66 and Gly67. Glu122 and Asp123 together coordinate Mg(2+). Residue Asp126 is the Proton acceptor of the active site. GMP-binding positions include Lys154, 175-176, and Asp182; that span reads FV. Arg188 contacts diphosphate.

Belongs to the purine/pyrimidine phosphoribosyltransferase family. Mg(2+) is required as a cofactor.

It localises to the cytoplasm. It catalyses the reaction IMP + diphosphate = hypoxanthine + 5-phospho-alpha-D-ribose 1-diphosphate. The enzyme catalyses GMP + diphosphate = guanine + 5-phospho-alpha-D-ribose 1-diphosphate. Its pathway is purine metabolism; IMP biosynthesis via salvage pathway; IMP from hypoxanthine: step 1/1. It functions in the pathway purine metabolism; GMP biosynthesis via salvage pathway; GMP from guanine: step 1/1. Functionally, purine salvage pathway enzyme that catalyzes the transfer of the ribosyl-5-phosphate group from 5-phospho-alpha-D-ribose 1-diphosphate (PRPP) to the N9 position of the 6-oxopurines hypoxanthine and guanine to form the corresponding ribonucleotides IMP (inosine 5'-monophosphate) and GMP (guanosine 5'-monophosphate), with the release of PPi. The protein is Hypoxanthine-guanine phosphoribosyltransferase (hpt) of Mycobacterium avium.